Consider the following 54-residue polypeptide: UPF0391 membrane protein Bpet1858 (54 aa).

2 helical membrane passes run 5–25 and 27–47; these read AVVFFVIAIIAAVLGFGGIAA and AAGIAKILFFVFLILALLSIL.

The protein belongs to the UPF0391 family.

It is found in the cell membrane. In Bordetella petrii (strain ATCC BAA-461 / DSM 12804 / CCUG 43448), this protein is UPF0391 membrane protein Bpet1858.